The chain runs to 101 residues: Small ribosomal subunit protein uS14 (101 aa).

The disordered stretch occupies residues 1–26 (MAKVSSIQKNKSRQKKSQSLHNKRSE). Basic residues predominate over residues 10–22 (NKSRQKKSQSLHN).

The protein belongs to the universal ribosomal protein uS14 family. Part of the 30S ribosomal subunit. Contacts proteins S3 and S10.

In terms of biological role, binds 16S rRNA, required for the assembly of 30S particles and may also be responsible for determining the conformation of the 16S rRNA at the A site. In Rickettsia prowazekii (strain Madrid E), this protein is Small ribosomal subunit protein uS14.